Consider the following 207-residue polypeptide: MRELTKRQSEIYDYIKHVVQTKGYPPSVREIGEAVGLASSSTVHGHLSRLEEKGYIKRDPTKPRAIEIVSEQTNDAVNMEETIYVPVIGKVTAGIPITAVENIEEYFPLPEHLTSTHNSDIFILNVVGESMIEAGILDGDKVIVRSQTIAENGDIIVAMTEDDEATVKRFYKEKTRYRLQPENSTMSPIYLDNVTVIGKVIGLYREL.

The segment at residues 28-48 (VREIGEAVGLASSSTVHGHLS) is a DNA-binding region (H-T-H motif). Catalysis depends on for autocatalytic cleavage activity residues serine 130 and lysine 168.

This sequence belongs to the peptidase S24 family. In terms of assembly, homodimer.

It catalyses the reaction Hydrolysis of Ala-|-Gly bond in repressor LexA.. Its function is as follows. Represses a number of genes involved in the response to DNA damage (SOS response), including recA and lexA. In the presence of single-stranded DNA, RecA interacts with LexA causing an autocatalytic cleavage which disrupts the DNA-binding part of LexA, leading to derepression of the SOS regulon and eventually DNA repair. The polypeptide is LexA repressor (Staphylococcus haemolyticus (strain JCSC1435)).